We begin with the raw amino-acid sequence, 1058 residues long: Carbamoyl phosphate synthase pyrimidine-specific large chain (1058 aa).

The segment at Met-1–Glu-401 is carboxyphosphate synthetic domain. ATP-binding residues include Arg-129, Arg-169, Gly-175, Gly-176, Gln-208, Ile-210, Glu-215, Gly-241, Ile-242, His-243, Gln-284, and Glu-298. The ATP-grasp 1 domain maps to Lys-133 to Val-327. Positions 284, 298, and 300 each coordinate Mg(2+). Residues Gln-284, Glu-298, and Asn-300 each coordinate Mn(2+). Residues Ile-402–Ser-546 form an oligomerization domain region. The tract at residues Ile-547–Lys-929 is carbamoyl phosphate synthetic domain. The region spanning Asp-671–Leu-861 is the ATP-grasp 2 domain. Residues Arg-707, Ser-746, Leu-748, Glu-752, Gly-777, Val-778, His-779, Ser-780, Gln-820, and Glu-832 each coordinate ATP. The Mg(2+) site is built by Gln-820, Glu-832, and Asn-834. Mn(2+) contacts are provided by Gln-820, Glu-832, and Asn-834. In terms of domain architecture, MGS-like spans Leu-930–Leu-1058. Residues Leu-930–Leu-1058 form an allosteric domain region.

It belongs to the CarB family. In terms of assembly, composed of two chains; the small (or glutamine) chain promotes the hydrolysis of glutamine to ammonia, which is used by the large (or ammonia) chain to synthesize carbamoyl phosphate. Tetramer of heterodimers (alpha,beta)4. The cofactor is Mg(2+). It depends on Mn(2+) as a cofactor.

It carries out the reaction hydrogencarbonate + L-glutamine + 2 ATP + H2O = carbamoyl phosphate + L-glutamate + 2 ADP + phosphate + 2 H(+). The catalysed reaction is hydrogencarbonate + NH4(+) + 2 ATP = carbamoyl phosphate + 2 ADP + phosphate + 2 H(+). It participates in amino-acid biosynthesis; L-arginine biosynthesis; carbamoyl phosphate from bicarbonate: step 1/1. Its pathway is pyrimidine metabolism; UMP biosynthesis via de novo pathway; (S)-dihydroorotate from bicarbonate: step 1/3. Small subunit of the glutamine-dependent carbamoyl phosphate synthetase (CPSase). CPSase catalyzes the formation of carbamoyl phosphate from the ammonia moiety of glutamine, carbonate, and phosphate donated by ATP, constituting the first step of the biosynthetic pathway leading to pyrimidine nucleotides. The large subunit (synthetase) binds the substrates ammonia (free or transferred from glutamine from the small subunit), hydrogencarbonate and ATP and carries out an ATP-coupled ligase reaction, activating hydrogencarbonate by forming carboxy phosphate which reacts with ammonia to form carbamoyl phosphate. This Lactiplantibacillus plantarum (strain ATCC BAA-793 / NCIMB 8826 / WCFS1) (Lactobacillus plantarum) protein is Carbamoyl phosphate synthase pyrimidine-specific large chain (pyrAB).